The chain runs to 800 residues: Serine/threonine-protein kinase KIN4 (800 aa).

The Protein kinase domain maps to 46-313 (YIIGSTLGEG…LQTIKRHVWL (268 aa)). ATP contacts are provided by residues 52 to 60 (LGEGEFGKV) and K80. The Proton acceptor role is filled by D175. 2 disordered regions span residues 331-397 (LQKE…GSKV) and 438-487 (SARH…TSFT). Residues 348-358 (STYSSSASSYS) show a composition bias toward low complexity. S365 and S388 each carry phosphoserine. Polar residues-rich tracts occupy residues 380–395 (QLAT…STGS) and 459–473 (GSPT…PSSK). Residue S521 is modified to Phosphoserine. Disordered regions lie at residues 629–661 (EPTN…DKDS) and 678–754 (SLNG…PGRS). Residues 678–721 (SLNGSRSTVESRTSKGNAPPVSSRNPSGQSNRSNIKITQQQPRN) show a composition bias toward polar residues. Basic and acidic residues predominate over residues 727–740 (PNPDKKINDNRIRD). S748 carries the post-translational modification Phosphoserine.

This sequence belongs to the protein kinase superfamily. Ser/Thr protein kinase family.

The enzyme catalyses L-seryl-[protein] + ATP = O-phospho-L-seryl-[protein] + ADP + H(+). The catalysed reaction is L-threonyl-[protein] + ATP = O-phospho-L-threonyl-[protein] + ADP + H(+). In terms of biological role, this protein is probably a serine/threonine protein kinase. This Saccharomyces cerevisiae (strain ATCC 204508 / S288c) (Baker's yeast) protein is Serine/threonine-protein kinase KIN4 (KIN4).